A 412-amino-acid polypeptide reads, in one-letter code: Small ribosomal subunit protein mL103 (rPPR7) (412 aa).

The transit peptide at Met1–Phe14 directs the protein to the mitochondrion. The segment covering Gly21–Lys37 has biased composition (polar residues). The disordered stretch occupies residues Gly21–Glu43. PPR repeat units follow at residues Glu101 to Arg135, Ser136 to Arg166, Asp173 to Val207, Thr208 to Leu242, Asp243 to Pro276, Asp277 to Pro311, Asn312 to Pro346, and Asp347 to Lys377.

Belongs to the PPR family. P subfamily. As to quaternary structure, component of the mitochondrial ribosome small subunit.

The protein localises to the mitochondrion. This is Small ribosomal subunit protein mL103 (rPPR7) from Arabidopsis thaliana (Mouse-ear cress).